Consider the following 331-residue polypeptide: Protein-methionine-sulfoxide reductase catalytic subunit MsrP (331 aa).

Residues 1–54 (MLIKTDRWLRGDDIPASEITPQHLFDQRRRLLAAAALGAAGAALSPWAARRAFA) constitute a signal peptide (tat-type signal). Mo-molybdopterin is bound by residues N86, 89 to 90 (YE), C144, S179, N227, R232, and 243 to 245 (SAK).

The protein belongs to the MsrP family. In terms of assembly, heterodimer of a catalytic subunit (MsrP) and a heme-binding subunit (MsrQ). Mo-molybdopterin serves as cofactor. Post-translationally, predicted to be exported by the Tat system. The position of the signal peptide cleavage has not been experimentally proven.

The protein localises to the periplasm. The catalysed reaction is L-methionyl-[protein] + a quinone + H2O = L-methionyl-(S)-S-oxide-[protein] + a quinol. It carries out the reaction L-methionyl-[protein] + a quinone + H2O = L-methionyl-(R)-S-oxide-[protein] + a quinol. Part of the MsrPQ system that repairs oxidized periplasmic proteins containing methionine sulfoxide residues (Met-O), using respiratory chain electrons. Thus protects these proteins from oxidative-stress damage caused by reactive species of oxygen and chlorine generated by the host defense mechanisms. MsrPQ is essential for the maintenance of envelope integrity under bleach stress, rescuing a wide series of structurally unrelated periplasmic proteins from methionine oxidation. The catalytic subunit MsrP is non-stereospecific, being able to reduce both (R-) and (S-) diastereoisomers of methionine sulfoxide. The sequence is that of Protein-methionine-sulfoxide reductase catalytic subunit MsrP from Ralstonia nicotianae (strain ATCC BAA-1114 / GMI1000) (Ralstonia solanacearum).